The primary structure comprises 704 residues: MNPMQGPRSIGGSSTEVNQVDGESIYCTETSLNTMLNPADTGFPNNSTPSGRPTYASSSSHAAQDHTWWRFGESSSIPGPSDQVNSIGIKTSHQLPQDGTHHFVGYGSEGRQTGLNGMMVDGGVHAGSHIRNVPSFLRGSSSNPMPQHVDMSMDMDSDNCNAQTSGVVIRHNSYGSSLGSSVQAAGESSSGPASPFGGWGSSCKRKALEGSPSHYFSGETPNRIVQTENSASHASLSQYGASSSLSLATPSQSSPNVTNHFGRTEQMFGSGGGRAVAASAFHSTRNTDTLSRAGRRLNPRQPQESVAFSVSHGGTSVRPTGSLQQNLPLNSPFVDPPDVRSSSITSGSNTGENQTNIVHLPALTRNIHQYAWDASFSSRASNPSGIGMPAERLGPQWETPRSNQEQPLFAPATDMRQPVHDLWNFARGSPGSSVDSLFVPRAGPSSAIHTPQPNPTWIPPQNAPPHNPSRTSELSPWSLFPSIESPSASHGGPLPLLPAGPSVSSNEVTMPSSSNSRSHRSRHRRSGLLLERQNELLHLRHIGRSLAADGNGRNQIISEIRQVLHAMRRGENLRVEDYMVFDPLIYQGMTDMHDRHREMRLDVDNMSYEELLALGERIGDVSTGLSEEVILKAMKQHKHTSSSPSSVELHQNIEPCCICQEEYVEGDNLGTLKCGHEFHKDCIKQWVMIKNLCPICKTEALKTP.

Disordered stretches follow at residues 1–20 (MNPM…VNQV), 37–61 (NPAD…SSSH), 176–197 (SSLG…SPFG), 245–354 (LSLA…GENQ), 381–403 (SNPS…PRSN), and 436–525 (SLFV…RHRR). Residues 43–61 (FPNNSTPSGRPTYASSSSH) show a composition bias toward polar residues. 2 stretches are compositionally biased toward low complexity: residues 184 to 196 (AAGE…ASPF) and 245 to 255 (LSLATPSQSSP). Composition is skewed to polar residues over residues 281–290 (FHSTRNTDTL), 300–329 (RQPQ…NLPL), and 340–354 (RSSS…GENQ). A compositionally biased stretch (pro residues) spans 452–467 (QPNPTWIPPQNAPPHN). Over residues 485–505 (SPSASHGGPLPLLPAGPSVSS) the composition is skewed to low complexity. Residues 656–697 (CCICQEEYVEGDNLGTLKCGHEFHKDCIKQWVMIKNLCPICK) form an RING-type; atypical zinc finger.

It belongs to the RING-type zinc finger family. In terms of assembly, interacts with MED25 and UBC11.

The catalysed reaction is S-ubiquitinyl-[E2 ubiquitin-conjugating enzyme]-L-cysteine + [acceptor protein]-L-lysine = [E2 ubiquitin-conjugating enzyme]-L-cysteine + N(6)-ubiquitinyl-[acceptor protein]-L-lysine.. Its pathway is protein modification; protein ubiquitination. Functionally, E3 ubiquitin-protein ligase that functions as a regulator of MED25 stability by targeting MED25 for degradation in a RING-H2-dependent way. Proteasome-dependent degradation of MED25 seems to activate its function as positive regulator of FLOWERING LOCUS T (FT) and is important to induce the expression of FT and consequently to promote flowering. This Arabidopsis thaliana (Mouse-ear cress) protein is E3 ubiquitin-protein ligase MBR1 (MBR1).